Consider the following 823-residue polypeptide: MTRRRSRPSGGAGRRERARATGPQKPQAPEPPPPPSLEAGAGAGPPEAPAEPYRDDPREEDEPKLAPGPQVPPTTSQSVQTCCLLCHRERKGWEEGPSQNGLVLQGEKLPPDFMPKLVKNLLGEMPLWVCQSCRKSMEEDERQTGREHAVAISLSHTSCKSQSCGGDSHSSSSSSSSSSSSSSSCHGNSGDWDPSSFLSAHKLSGLWNSPHSSGAMPGGSLGSPPTIPGEVFPISEHHRHSDLTAPPNSPTGHHPQPAPLIPSHPGSFGSPPHPHLLPTTPAVHFPAQVSECPVAVAAAPHTPGPCQSPHLPSTSMPLLKMPPPFSGCSHPCSGHCSGHCSGPLLPPPSSQQLPSTHSRDPGCKGHKFTHSGLTCQLPQPCEADEGLGEEEDSSSERSSCTSSSTHQRDGKFCDCCYCEFFGHNAEKEKAQLAAEALKQANRSVSGSRELRPARESLLGWPDRELDRVNSFLNSRLQEIKNTVKDSICASFSMCELSVDSNGFSKEGATEPKPQSLAPSNPSGSSEQRPDINLDLSPLTLGSPQNHMLQAPGEPAPPWAEMRSPHPPWTEVKGPPPGIIPENGLVRRLNTVPNLSRMIWVKTPKPGNPSSEEPSIKGAPGCKQELPEPVASGGKPRKGKRQGNQAKKSEVSPASQSPACLETPSAKGQTPSPKQPSKAPEPPRVDSCAEAGEGSQGTRPGPGWADSPKADKEKGNSWRNWPGEAKARPLEQESVQPPGPARPQSFQQGKGRSRRSRNKQEKSASSLDDVFLPKDMDGVEMDETDREVEYFKRFCLDSAKQTRQKVAVNWTNFSLKKTTPSTAQ.

Disordered regions lie at residues 1 to 78, 158 to 191, 209 to 281, and 381 to 409; these read MTRR…TSQS, SCKSQSCGGDSHSSSSSSSSSSSSSSSCHGNSGD, SPHS…PTTP, and CEADEGLGEEEDSSSERSSCTSSSTHQRD. The span at 26–36 shows a compositional bias: pro residues; sequence PQAPEPPPPPS. Residues 52 to 64 are compositionally biased toward basic and acidic residues; that stretch reads PYRDDPREEDEPK. 2 stretches are compositionally biased toward low complexity: residues 168 to 184 and 263 to 281; these read SHSSSSSSSSSSSSSSS and SHPGSFGSPPHPHLLPTTP. Residues 382–393 are compositionally biased toward acidic residues; the sequence is EADEGLGEEEDS. A coiled-coil region spans residues 422-484; that stretch reads GHNAEKEKAQ…RLQEIKNTVK (63 aa). Disordered stretches follow at residues 503 to 583 and 599 to 775; these read FSKE…PENG and WVKT…PKDM. 2 stretches are compositionally biased toward polar residues: residues 516 to 526 and 641 to 657; these read LAPSNPSGSSE and QGNQAKKSEVSPASQSP. Phosphoserine occurs at positions 694, 706, and 813.

It belongs to the FAM193 family.

It localises to the cytoplasm. The protein localises to the nucleus. The chain is Protein FAM193B (FAM193B) from Bos taurus (Bovine).